Reading from the N-terminus, the 497-residue chain is Proline--tRNA ligase (497 aa).

Belongs to the class-II aminoacyl-tRNA synthetase family. ProS type 3 subfamily. In terms of assembly, homodimer.

The protein resides in the cytoplasm. It carries out the reaction tRNA(Pro) + L-proline + ATP = L-prolyl-tRNA(Pro) + AMP + diphosphate. Its function is as follows. Catalyzes the attachment of proline to tRNA(Pro) in a two-step reaction: proline is first activated by ATP to form Pro-AMP and then transferred to the acceptor end of tRNA(Pro). The protein is Proline--tRNA ligase of Bacteroides fragilis (strain ATCC 25285 / DSM 2151 / CCUG 4856 / JCM 11019 / LMG 10263 / NCTC 9343 / Onslow / VPI 2553 / EN-2).